The sequence spans 336 residues: IgLON family member 5 (336 aa).

Residues 1-30 (MPPPAPGARLRLLAAAALAGLAVISRGLLS) form the signal peptide. 3 consecutive Ig-like C2-type domains span residues 33-122 (LEFN…QPYT), 132-217 (PARI…VNYP), and 218-307 (PTIT…MRLL). 4 N-linked (GlcNAc...) asparagine glycosylation sites follow: asparagine 41, asparagine 49, asparagine 67, and asparagine 137. A disulfide bond links cysteine 54 and cysteine 112. Intrachain disulfides connect cysteine 154-cysteine 195 and cysteine 238-cysteine 291. Residue asparagine 288 is glycosylated (N-linked (GlcNAc...) asparagine).

It belongs to the immunoglobulin superfamily. IgLON family.

The protein resides in the secreted. This Homo sapiens (Human) protein is IgLON family member 5 (IGLON5).